A 364-amino-acid polypeptide reads, in one-letter code: UDP-N-acetylglucosamine--N-acetylmuramyl-(pentapeptide) pyrophosphoryl-undecaprenol N-acetylglucosamine transferase (364 aa).

UDP-N-acetyl-alpha-D-glucosamine is bound by residues 10-12, Asn-124, Arg-166, Ser-196, Ile-252, and Gln-297; that span reads TGG.

This sequence belongs to the glycosyltransferase 28 family. MurG subfamily.

The protein resides in the cell membrane. The enzyme catalyses di-trans,octa-cis-undecaprenyl diphospho-N-acetyl-alpha-D-muramoyl-L-alanyl-D-glutamyl-meso-2,6-diaminopimeloyl-D-alanyl-D-alanine + UDP-N-acetyl-alpha-D-glucosamine = di-trans,octa-cis-undecaprenyl diphospho-[N-acetyl-alpha-D-glucosaminyl-(1-&gt;4)]-N-acetyl-alpha-D-muramoyl-L-alanyl-D-glutamyl-meso-2,6-diaminopimeloyl-D-alanyl-D-alanine + UDP + H(+). It participates in cell wall biogenesis; peptidoglycan biosynthesis. Its function is as follows. Cell wall formation. Catalyzes the transfer of a GlcNAc subunit on undecaprenyl-pyrophosphoryl-MurNAc-pentapeptide (lipid intermediate I) to form undecaprenyl-pyrophosphoryl-MurNAc-(pentapeptide)GlcNAc (lipid intermediate II). This chain is UDP-N-acetylglucosamine--N-acetylmuramyl-(pentapeptide) pyrophosphoryl-undecaprenol N-acetylglucosamine transferase, found in Ruminiclostridium cellulolyticum (strain ATCC 35319 / DSM 5812 / JCM 6584 / H10) (Clostridium cellulolyticum).